The chain runs to 235 residues: Purine nucleoside phosphorylase DeoD-type (235 aa).

A purine D-ribonucleoside is bound at residue histidine 4. Phosphate-binding positions include glycine 20, arginine 24, arginine 43, and 87–90; that span reads RVGT. Residues glutamate 162, 179–181, and 203–204 contribute to the a purine D-ribonucleoside site; these read EME and SD. Catalysis depends on aspartate 204, which acts as the Proton donor.

The protein belongs to the PNP/UDP phosphorylase family. Homohexamer; trimer of homodimers.

It carries out the reaction a purine D-ribonucleoside + phosphate = a purine nucleobase + alpha-D-ribose 1-phosphate. It catalyses the reaction a purine 2'-deoxy-D-ribonucleoside + phosphate = a purine nucleobase + 2-deoxy-alpha-D-ribose 1-phosphate. Catalyzes the reversible phosphorolytic breakdown of the N-glycosidic bond in the beta-(deoxy)ribonucleoside molecules, with the formation of the corresponding free purine bases and pentose-1-phosphate. This chain is Purine nucleoside phosphorylase DeoD-type, found in Bacillus cytotoxicus (strain DSM 22905 / CIP 110041 / 391-98 / NVH 391-98).